The following is a 264-amino-acid chain: Tetraspanin-12 (264 aa).

Residues 1 to 13 (MLRLSNAAVITTN) are Cytoplasmic-facing. A helical membrane pass occupies residues 14-34 (AILALIGLAALSFSVYVYVQG). The Extracellular portion of the chain corresponds to 35-45 (PSQCQRFVQNP). The helical transmembrane segment at 46–66 (LIVTAALLFFISSLGLIAALY) threads the bilayer. The Cytoplasmic portion of the chain corresponds to 67–75 (GSHIIITLY). Residues 76 to 96 (LFFLFLSILLLLVLSVFIFLV) traverse the membrane as a helical segment. The Extracellular segment spans residues 97-228 (TNPTAGKALS…VLKGIRKRWR (132 aa)). N-linked (GlcNAc...) asparagine glycosylation is present at asparagine 180. The helical transmembrane segment at 229–249 (ILIVVNLLLILLVVFLYSCGC) threads the bilayer. Over 250 to 264 (CVRKNNRVPWKRRFF) the chain is Cytoplasmic.

Belongs to the tetraspanin (TM4SF) family.

It localises to the membrane. Functionally, may be involved in the regulation of cell differentiation. The protein is Tetraspanin-12 (TET12) of Arabidopsis thaliana (Mouse-ear cress).